Consider the following 249-residue polypeptide: Pyridoxamine 5'-phosphate oxidase family protein ustO (249 aa).

21–24 is a binding site for substrate; it reads LFFV. FMN is bound by residues 76–81, 91–92, Arg-105, and 163–164; these read ATVMFC and RL. 215–217 lines the substrate pocket; that stretch reads ASY. A helical membrane pass occupies residues 227–247; sequence TGMALMFLVMVVAQWVGYVLY.

It belongs to the pyridoxamine 5'-phosphate oxidase family. Requires FMN as cofactor.

The protein localises to the membrane. It participates in mycotoxin biosynthesis. Functionally, pyridoxamine 5'-phosphate oxidase family protein; part of the gene cluster that mediates the biosynthesis of the secondary metabolite ustiloxin B, an antimitotic tetrapeptide. First, ustA is processed by the subtilisin-like endoprotease Kex2 that is outside the ustiloxin B gene cluster, at the C-terminal side of Arg-Lys, after transfer to Golgi apparatus through the endoplasmic reticulum (ER). Cleavage by KEX2 generates 16 peptides YAIG-I to YAIG-XVI. To process the precursor peptide further, at least two peptidases are necessary to cleave the N-terminal and C-terminal sides of the Tyr-Ala-Ile-Gly core peptide which serves as backbone for the synthesis of ustiloxin B, through cyclization and modification of the tyrosine with a non-protein coding amino acid, norvaline. One of the two peptidases must be the serine peptidase ustP; and the other pepdidase is probably ustH. Macrocyclization of the core peptide derived from ustA requires the tyrosinase ustQ, as well as the homologous oxidases ustYa and ustYb, and leads to the production of the first cyclization product N-desmethylustiloxin F. For the formation of N-desmethylustiloxin F, three oxidation steps are required, hydroxylation at the benzylic position, hydroxylation at either the aromatic ring of Tyr or beta-position of Ile, and oxidative cyclization. UstQ may catalyze the oxidation of a phenol moiety, whereas the ustYa and ustYb are most likely responsible for the remaining two-step oxidations. N-desmethylustiloxin F is then methylated by ustM to yield ustiloxin F which in turn substrate of the cytochrome P450 monooxygenase ustC which catalyzes the formation of S-deoxyustiloxin H. The flavoprotein monooxygenases ustF1 and ustF2 then participate in the modification of the side chain of S-deoxyustiloxin H, leading to the synthesis of an oxime intermediate, via ustiloxin H. Finally, carboxylative dehydration performed by the cysteine desulfurase-like protein ustD yields ustiloxin B. This chain is Pyridoxamine 5'-phosphate oxidase family protein ustO, found in Aspergillus flavus (strain ATCC 200026 / FGSC A1120 / IAM 13836 / NRRL 3357 / JCM 12722 / SRRC 167).